Reading from the N-terminus, the 307-residue chain is Metapyrocatechase (307 aa).

VOC domains are found at residues 7-122 (RPGH…LYAD) and 150-269 (RFDH…VFCG). Residues His-153, His-214, and Glu-265 each contribute to the Fe cation site.

This sequence belongs to the extradiol ring-cleavage dioxygenase family. As to quaternary structure, homotetramer. It depends on Fe(2+) as a cofactor.

It catalyses the reaction catechol + O2 = (2Z,4E)-2-hydroxy-6-oxohexa-2,4-dienoate + H(+). It functions in the pathway xenobiotic degradation; toluene degradation. This chain is Metapyrocatechase (bztE), found in Pseudomonas aeruginosa.